The chain runs to 129 residues: Prefoldin subunit 6 (129 aa).

N-acetylalanine is present on Ala2. Position 21 is an N6-acetyllysine (Lys21). Residue Lys66 is modified to N6-acetyllysine; alternate. A Glycyl lysine isopeptide (Lys-Gly) (interchain with G-Cter in SUMO1); alternate cross-link involves residue Lys66. A Glycyl lysine isopeptide (Lys-Gly) (interchain with G-Cter in SUMO2); alternate cross-link involves residue Lys66.

This sequence belongs to the prefoldin subunit beta family. In terms of assembly, heterohexamer of two PFD-alpha type and four PFD-beta type subunits. Component of the PAQosome complex which is responsible for the biogenesis of several protein complexes and which consists of R2TP complex members RUVBL1, RUVBL2, RPAP3 and PIH1D1, URI complex members PFDN2, PFDN6, PDRG1, UXT and URI1 as well as ASDURF, POLR2E and DNAAF10/WDR92.

Its function is as follows. Binds specifically to cytosolic chaperonin (c-CPN) and transfers target proteins to it. Binds to nascent polypeptide chain and promotes folding in an environment in which there are many competing pathways for nonnative proteins. This chain is Prefoldin subunit 6 (PFDN6), found in Bos taurus (Bovine).